The following is a 190-amino-acid chain: Proline-rich protein 3 (190 aa).

3 disordered regions span residues 1–94, 110–130, and 142–161; these read MPKR…GLGP, PPFP…KEAR, and KNTY…SDRP. The segment covering 37–48 has biased composition (pro residues); the sequence is MGPPSLLGPPPM. The C3H1-type zinc-finger motif lies at 157–185; it reads KSDRPVCRHFSKKGHCRYEDHCAFYHPGV.

The protein is Proline-rich protein 3 (Prr3) of Mus musculus (Mouse).